Consider the following 111-residue polypeptide: DIVLTQSPASLAVSLGQRATISCRASESVVNYGVSLMHWFQQKPGQPPKLLIYGASNRGSGVPARFSGSGSGTDFSLIIHPMEEDDSAMYFCHQTKEVPWTFGGGTDLEIE.

The tract at residues 1-23 (DIVLTQSPASLAVSLGQRATISC) is framework-1. C23 and C92 are joined by a disulfide. The interval 24-38 (RASESVVNYGVSLMH) is complementarity-determining-1. A framework-2 region spans residues 39–53 (WFQQKPGQPPKLLIY). Positions 54–60 (GASNRGS) are complementarity-determining-2. The framework-3 stretch occupies residues 61 to 92 (GVPARFSGSGSGTDFSLIIHPMEEDDSAMYFC). Residues 93–101 (HQTKEVPWT) form a complementarity-determining-3 region. Positions 102-111 (FGGGTDLEIE) are framework-4.

The sequence is that of Ig kappa chain V-III region PC 2413 from Mus musculus (Mouse).